Reading from the N-terminus, the 343-residue chain is Cytoplasmic tRNA 2-thiolation protein 1 (343 aa).

This sequence belongs to the TtcA family. CTU1/NCS6/ATPBD3 subfamily.

It localises to the cytoplasm. It functions in the pathway tRNA modification; 5-methoxycarbonylmethyl-2-thiouridine-tRNA biosynthesis. In terms of biological role, plays a central role in 2-thiolation of mcm(5)S(2)U at tRNA wobble positions of tRNA(Lys), tRNA(Glu) and tRNA(Gln). Directly binds tRNAs and probably acts by catalyzing adenylation of tRNAs, an intermediate required for 2-thiolation. It is unclear whether it acts as a sulfurtransferase that transfers sulfur from thiocarboxylated URM1 onto the uridine of tRNAs at wobble position. This is Cytoplasmic tRNA 2-thiolation protein 1 from Drosophila virilis (Fruit fly).